Here is a 193-residue protein sequence, read N- to C-terminus: 3-isopropylmalate dehydratase small subunit (193 aa).

Belongs to the LeuD family. LeuD type 1 subfamily. As to quaternary structure, heterodimer of LeuC and LeuD.

The enzyme catalyses (2R,3S)-3-isopropylmalate = (2S)-2-isopropylmalate. It participates in amino-acid biosynthesis; L-leucine biosynthesis; L-leucine from 3-methyl-2-oxobutanoate: step 2/4. Functionally, catalyzes the isomerization between 2-isopropylmalate and 3-isopropylmalate, via the formation of 2-isopropylmaleate. The polypeptide is 3-isopropylmalate dehydratase small subunit (Listeria monocytogenes serovar 1/2a (strain ATCC BAA-679 / EGD-e)).